The primary structure comprises 584 residues: HERV-H_2q24.3 provirus ancestral Env polyprotein (584 aa).

The signal sequence occupies residues methionine 1–proline 35. The Extracellular portion of the chain corresponds to leucine 36 to valine 523. The N-linked (GlcNAc...) asparagine glycan is linked to asparagine 47. The CXXC signature appears at cysteine 64–cysteine 67. Asparagine 199, asparagine 222, asparagine 265, asparagine 283, asparagine 352, and asparagine 370 each carry an N-linked (GlcNAc...) asparagine glycan. A fusion peptide region spans residues valine 388–glycine 408. The short motif at leucine 454–leucine 470 is the CKS-17 element. Cysteine 471 and cysteine 478 are disulfide-bonded. The CX6CC motif lies at cysteine 471 to cysteine 479. Asparagine 483 is a glycosylation site (N-linked (GlcNAc...) asparagine). A helical membrane pass occupies residues leucine 524–phenylalanine 544. Topologically, residues arginine 545–alanine 584 are cytoplasmic.

This sequence belongs to the gamma type-C retroviral envelope protein family. HERV class-I H env subfamily. The surface (SU) and transmembrane (TM) proteins form a heterodimer. SU and TM are attached by noncovalent interactions or by a labile interchain disulfide bond. Post-translationally, specific enzymatic cleavages in vivo yield the mature SU and TM proteins. In terms of processing, the CXXC motif is highly conserved across a broad range of retroviral envelope proteins. It is thought to participate in the formation of a labile disulfide bond possibly with the CX6CC motif present in the transmembrane protein. Isomerization of the intersubunit disulfide bond to an SU intrachain disulfide bond is thought to occur upon receptor recognition in order to allow membrane fusion. In terms of tissue distribution, low expression in skin and testis. No expression in several cell lines.

The protein localises to the virion. It localises to the cell membrane. In terms of biological role, retroviral envelope proteins mediate receptor recognition and membrane fusion during early infection. Endogenous envelope proteins may have kept, lost or modified their original function during evolution. This endogenous envelope protein has lost its original fusogenic properties but has immunosuppressive properties in vivo. SU mediates receptor recognition. Its function is as follows. TM anchors the envelope heterodimer to the viral membrane through one transmembrane domain. The other hydrophobic domain, called fusion peptide, mediates fusion of the viral membrane with the target cell membrane. This is HERV-H_2q24.3 provirus ancestral Env polyprotein from Homo sapiens (Human).